Reading from the N-terminus, the 191-residue chain is Peptidyl-tRNA hydrolase (191 aa).

Tyr14 serves as a coordination point for tRNA. The active-site Proton acceptor is the His19. The tRNA site is built by Tyr64, Asn66, and Asn112.

This sequence belongs to the PTH family. In terms of assembly, monomer.

It is found in the cytoplasm. It carries out the reaction an N-acyl-L-alpha-aminoacyl-tRNA + H2O = an N-acyl-L-amino acid + a tRNA + H(+). Hydrolyzes ribosome-free peptidyl-tRNAs (with 1 or more amino acids incorporated), which drop off the ribosome during protein synthesis, or as a result of ribosome stalling. Its function is as follows. Catalyzes the release of premature peptidyl moieties from peptidyl-tRNA molecules trapped in stalled 50S ribosomal subunits, and thus maintains levels of free tRNAs and 50S ribosomes. This is Peptidyl-tRNA hydrolase from Syntrophotalea carbinolica (strain DSM 2380 / NBRC 103641 / GraBd1) (Pelobacter carbinolicus).